We begin with the raw amino-acid sequence, 333 residues long: MANVMKAPKRQLTYVTDLNKCIGCQTCTVACKKLWTTGPGQDFMYWRNVETTPGLGYPRNWQTKGGGYKNGELQKGKIPPMIDYGIPFEFDYAGRLFEGKKERVRPSPTPRSAPNWDEDQGAGEYPNNSFFYLPRMCNHCTKPACLEACPNEAIYKREQDGIVVIHQDKCKGAQACVQSCPYAKPYFNPVANKANKCIGCFPRIEQGVAPGCVAQCVGRAMHVGFIDDTNSSVHKLIRLYKVALPLHPEFGTEPNVFYVPPVLGPRMELPNGELSTDPKIPLAQLEGLFGKQVRDVLAILQTEREKKMKGLASDLMDVLIGRRSADMMISPLT.

The 29-residue stretch at 12–40 (LTYVTDLNKCIGCQTCTVACKKLWTTGPG) folds into the 4Fe-4S ferredoxin-type 1 domain. Positions 21, 24, 27, and 31 each coordinate [4Fe-4S] cluster. The interval 101–121 (KERVRPSPTPRSAPNWDEDQG) is disordered. 4Fe-4S ferredoxin-type domains follow at residues 128-159 (NSFF…KREQ) and 161-190 (GIVV…FNPV). Residues Cys137, Cys140, and Cys145 each coordinate [4Fe-4S] cluster. Cys149, Cys170, and Cys176 together coordinate [3Fe-4S] cluster. Residues Cys180, Cys197, Cys200, Cys212, and Cys216 each coordinate [4Fe-4S] cluster.

In terms of assembly, heterotrimer of alpha, beta and gamma subunits. The cofactor is [3Fe-4S] cluster. Requires [4Fe-4S] cluster as cofactor.

Its subcellular location is the periplasm. Its function is as follows. Component of the perchlorate reductase that catalyzes the reduction of perchlorate to chlorite and allows anaerobic growth on perchlorate as the sole electron acceptor. The beta subunit may be responsible for electron transfer to the catalytic alpha subunit PcrA. The sequence is that of Perchlorate reductase subunit beta (pcrB) from Dechloromonas aromatica (strain RCB).